Here is a 300-residue protein sequence, read N- to C-terminus: MRAHYSYLKGDNVAVAQCPASCGELIQGWILGSEKLVSCPVDWYSTVAVTAAPPLINERPLSRAMVERVLAHWQYPAHWSNEIRVDVRSSIPVAKGMASSTADIAATAVATAHHLGHSLDETTLAQLCVSIEPTDSTVFHQLTLFDHNNAATQIACEPPPPIDLLVLESPVTLRTQDYHRLPRQQKLIASSATLQQAWNLVQEACITQNPLRLGEAATLSAIASQTLLPKPGFTALLSLVEECDLYGLNVAHSGSVVGLMLDRKRHDIARLKGKLAEKKLTRHWPKQHLLKMVTGGVKLQ.

92 to 102 contacts ATP; that stretch reads PVAKGMASSTA.

It belongs to the GHMP kinase family. PduX subfamily.

The protein localises to the cytoplasm. It catalyses the reaction L-threonine + ATP = O-phospho-L-threonine + ADP + H(+). The protein operates within cofactor biosynthesis; adenosylcobalamin biosynthesis. Its pathway is polyol metabolism; 1,2-propanediol degradation. Its function is as follows. L-threonine kinase that catalyzes the conversion of L-threonine to L-threonine-O-3-phosphate. Involved in the de novo synthesis of adenosylcobalamin (coenzyme B12) and the assimilation of cobyric acid. Uses ATP; the activity with CTP, GTP or UTP is 6, 11, and 3% of the activity with ATP, respectively. Functionally, the 1,2-propanediol (1,2-PD)-specific bacterial microcompartment (BMC) concentrates low levels of 1,2-PD catabolic enzymes, concentrates volatile reaction intermediates thus enhancing pathway flux and keeps the level of toxic, mutagenic propionaldehyde low. This gene probably benefits from its induction via the Pdu promoter, rather than a physical interaction with the BMC. The chain is L-threonine kinase from Salmonella typhimurium (strain LT2 / SGSC1412 / ATCC 700720).